The chain runs to 206 residues: ATP phosphoribosyltransferase (206 aa).

The protein belongs to the ATP phosphoribosyltransferase family. Short subfamily. In terms of assembly, heteromultimer composed of HisG and HisZ subunits.

It is found in the cytoplasm. It carries out the reaction 1-(5-phospho-beta-D-ribosyl)-ATP + diphosphate = 5-phospho-alpha-D-ribose 1-diphosphate + ATP. Its pathway is amino-acid biosynthesis; L-histidine biosynthesis; L-histidine from 5-phospho-alpha-D-ribose 1-diphosphate: step 1/9. In terms of biological role, catalyzes the condensation of ATP and 5-phosphoribose 1-diphosphate to form N'-(5'-phosphoribosyl)-ATP (PR-ATP). Has a crucial role in the pathway because the rate of histidine biosynthesis seems to be controlled primarily by regulation of HisG enzymatic activity. The protein is ATP phosphoribosyltransferase of Brachyspira hyodysenteriae (strain ATCC 49526 / WA1).